The chain runs to 375 residues: Succinyl-diaminopimelate desuccinylase (375 aa).

Position 66 (His66) interacts with Zn(2+). The active site involves Asp68. Asp99 contributes to the Zn(2+) binding site. The Proton acceptor role is filled by Glu133. Zn(2+)-binding residues include Glu134, Glu162, and His348.

The protein belongs to the peptidase M20A family. DapE subfamily. Homodimer. Zn(2+) serves as cofactor. The cofactor is Co(2+).

It catalyses the reaction N-succinyl-(2S,6S)-2,6-diaminopimelate + H2O = (2S,6S)-2,6-diaminopimelate + succinate. The protein operates within amino-acid biosynthesis; L-lysine biosynthesis via DAP pathway; LL-2,6-diaminopimelate from (S)-tetrahydrodipicolinate (succinylase route): step 3/3. Catalyzes the hydrolysis of N-succinyl-L,L-diaminopimelic acid (SDAP), forming succinate and LL-2,6-diaminopimelate (DAP), an intermediate involved in the bacterial biosynthesis of lysine and meso-diaminopimelic acid, an essential component of bacterial cell walls. This is Succinyl-diaminopimelate desuccinylase from Aeromonas salmonicida (strain A449).